A 175-amino-acid chain; its full sequence is Peptide deformylase (175 aa).

C96 and H138 together coordinate Fe cation. E139 is an active-site residue. H142 serves as a coordination point for Fe cation.

The protein belongs to the polypeptide deformylase family. It depends on Fe(2+) as a cofactor.

It carries out the reaction N-terminal N-formyl-L-methionyl-[peptide] + H2O = N-terminal L-methionyl-[peptide] + formate. Its function is as follows. Removes the formyl group from the N-terminal Met of newly synthesized proteins. Requires at least a dipeptide for an efficient rate of reaction. N-terminal L-methionine is a prerequisite for activity but the enzyme has broad specificity at other positions. The sequence is that of Peptide deformylase from Rhodopseudomonas palustris (strain BisB18).